A 79-amino-acid chain; its full sequence is Anti-insect Ac4 (79 aa).

A signal peptide spans M1–D17. Positions G18–P77 constitute an LCN-type CS-alpha/beta domain. Cystine bridges form between C26–C76, C30–C48, C34–C58, and C38–C60.

This sequence belongs to the long (4 C-C) scorpion toxin superfamily. Sodium channel inhibitor family. Alpha subfamily. Expressed by the venom gland.

The protein localises to the secreted. In terms of biological role, alpha toxins bind voltage-independently at site-3 of sodium channels (Nav) and inhibit the inactivation of the activated channels, thereby blocking neuronal transmission. This protein is weakly toxic against insects (ED(50)&gt;2 ug per 100 mg of blowfly larvae), but is inactive against mammalian sodium channels (rNav1.2a, and rNav1.4). This Androctonus crassicauda (Arabian fat-tailed scorpion) protein is Anti-insect Ac4.